Here is an 860-residue protein sequence, read N- to C-terminus: Leucine--tRNA ligase (860 aa).

Residues proline 42–histidine 52 carry the 'HIGH' region motif. The 'KMSKS' region motif lies at lysine 619–serine 623. Lysine 622 contacts ATP.

It belongs to the class-I aminoacyl-tRNA synthetase family.

It is found in the cytoplasm. It carries out the reaction tRNA(Leu) + L-leucine + ATP = L-leucyl-tRNA(Leu) + AMP + diphosphate. In Salmonella choleraesuis (strain SC-B67), this protein is Leucine--tRNA ligase.